Here is a 138-residue protein sequence, read N- to C-terminus: Translation initiation factor 2 subunit beta (138 aa).

The protein belongs to the eIF-2-beta/eIF-5 family. As to quaternary structure, heterotrimer composed of an alpha, a beta and a gamma chain.

Functionally, eIF-2 functions in the early steps of protein synthesis by forming a ternary complex with GTP and initiator tRNA. The chain is Translation initiation factor 2 subunit beta from Methanococcus maripaludis (strain C5 / ATCC BAA-1333).